The sequence spans 85 residues: Large ribosomal subunit protein bL31B (85 aa).

This sequence belongs to the bacterial ribosomal protein bL31 family. Type B subfamily. Part of the 50S ribosomal subunit.

This chain is Large ribosomal subunit protein bL31B, found in Staphylococcus saprophyticus subsp. saprophyticus (strain ATCC 15305 / DSM 20229 / NCIMB 8711 / NCTC 7292 / S-41).